Consider the following 350-residue polypeptide: Ferredoxin--NADP reductase (350 aa).

8 residues coordinate FAD: Thr25, Glu44, Gln52, Tyr57, Val97, Phe132, Asp298, and Ser339.

It belongs to the ferredoxin--NADP reductase type 2 family. Homodimer. Requires FAD as cofactor.

It catalyses the reaction 2 reduced [2Fe-2S]-[ferredoxin] + NADP(+) + H(+) = 2 oxidized [2Fe-2S]-[ferredoxin] + NADPH. The polypeptide is Ferredoxin--NADP reductase (Chlorobium limicola (strain DSM 245 / NBRC 103803 / 6330)).